The chain runs to 71 residues: Exodeoxyribonuclease 7 small subunit (71 aa).

It belongs to the XseB family. Heterooligomer composed of large and small subunits.

It is found in the cytoplasm. The catalysed reaction is Exonucleolytic cleavage in either 5'- to 3'- or 3'- to 5'-direction to yield nucleoside 5'-phosphates.. Bidirectionally degrades single-stranded DNA into large acid-insoluble oligonucleotides, which are then degraded further into small acid-soluble oligonucleotides. In Clostridium botulinum (strain Kyoto / Type A2), this protein is Exodeoxyribonuclease 7 small subunit.